A 636-amino-acid polypeptide reads, in one-letter code: Signal recognition particle receptor subunit alpha (636 aa).

3 disordered regions span residues 132 to 205 (APTT…ELSK), 217 to 246 (IQKHGKGLDKSSKSTKSDTPKEKGKKAPRV), and 280 to 314 (IRGTGPGGQLQDLDCSSSDDEGATQNTKPSATKGT). Composition is skewed to basic and acidic residues over residues 137 to 146 (KKFEDSEKAK) and 153 to 165 (IETRGEKTKEKAK). Phosphoserine is present on Ser177. The segment covering 217–238 (IQKHGKGLDKSSKSTKSDTPKE) has biased composition (basic and acidic residues). Residue Thr283 is modified to Phosphothreonine. Ser295, Ser296, and Ser297 each carry phosphoserine. The segment covering 302–312 (ATQNTKPSATK) has biased composition (polar residues). Thr303 is subject to Phosphothreonine. The interval 417–634 (YVVTFCGVNG…NAKAVVAALM (218 aa)) is NG domain. Residues 423-430 (GVNGVGKS) and 518-522 (DTAGR) contribute to the GTP site. At Thr576 the chain carries Phosphothreonine. 586-589 (TKFD) is a GTP binding site.

This sequence belongs to the GTP-binding SRP family. As to quaternary structure, heterodimer with SRPRB. Interacts with the signal recognition particle (SRP) complex subunit SRP54.

The protein resides in the endoplasmic reticulum membrane. In terms of biological role, component of the SRP (signal recognition particle) receptor. Ensures, in conjunction with the signal recognition particle, the correct targeting of the nascent secretory proteins to the endoplasmic reticulum membrane system. Forms a guanosine 5'-triphosphate (GTP)-dependent complex with the SRP subunit SRP54. SRP receptor compaction and GTPase rearrangement drive SRP-mediated cotranslational protein translocation into the ER. In Mus musculus (Mouse), this protein is Signal recognition particle receptor subunit alpha.